A 243-amino-acid polypeptide reads, in one-letter code: Protein unc-119 homolog B (243 aa).

A compositionally biased stretch (polar residues) spans 1 to 21; that stretch reads MNSQSSRNETAATAVNGSDSA. The segment at 1–49 is disordered; sequence MNSQSSRNETAATAVNGSDSAAASRDHKSGGGVLKRLKSRRNQVDRRPV. Residue Tyr134 participates in tetradecanoate binding.

Belongs to the PDE6D/unc-119 family. In terms of tissue distribution, detected in embryo. Detected in larvae four days after fertilization, in retina and neural tissues (at protein level). Detected in embryos at the sphere stage, during gastrulation, somitogenesis and in swimming larvae, both within and outside of the developing nervous system. Detected in adults.

The protein localises to the cell projection. The protein resides in the cilium. In terms of biological role, myristoyl-binding protein that acts as a cargo adapter: specifically binds the myristoyl moiety of a subset of N-terminally myristoylated proteins and is required for their localization. Plays a key role in localization of proteins to the primary cilium membrane. This is Protein unc-119 homolog B (unc119b) from Danio rerio (Zebrafish).